Reading from the N-terminus, the 98-residue chain is NADH-ubiquinone oxidoreductase chain 4L (98 aa).

The next 2 helical transmembrane spans lie at 26 to 46 (LVASLLCLEGMMMSLFIMATL) and 61 to 81 (IILLVFAACEAAVGLALLISI).

It belongs to the complex I subunit 4L family. In terms of assembly, core subunit of respiratory chain NADH dehydrogenase (Complex I) which is composed of 45 different subunits.

It localises to the mitochondrion inner membrane. It carries out the reaction a ubiquinone + NADH + 5 H(+)(in) = a ubiquinol + NAD(+) + 4 H(+)(out). Its function is as follows. Core subunit of the mitochondrial membrane respiratory chain NADH dehydrogenase (Complex I) which catalyzes electron transfer from NADH through the respiratory chain, using ubiquinone as an electron acceptor. Part of the enzyme membrane arm which is embedded in the lipid bilayer and involved in proton translocation. The protein is NADH-ubiquinone oxidoreductase chain 4L (MT-ND4L) of Macaca nigrescens (Gorontalo macaque).